Consider the following 226-residue polypeptide: ATP synthase F(0) complex subunit a (226 aa).

A run of 6 helical transmembrane segments spans residues 9-29, 68-88, 97-117, 138-158, 164-184, and 201-223; these read FITPTMMGLPIVILVIVFPAM, WALMLISLILFIGSTNLLGLV, QLSMNLGMAIPLWAGAVITGF, IPMLVVIETISLFIQPMALAI, ITAGHLLMHLIGGAVLALTSI, and ILEFAVALIQAYVFTLLVSLYLH.

Belongs to the ATPase A chain family. Component of the ATP synthase complex composed at least of ATP5F1A/subunit alpha, ATP5F1B/subunit beta, ATP5MC1/subunit c (homooctomer), MT-ATP6/subunit a, MT-ATP8/subunit 8, ATP5ME/subunit e, ATP5MF/subunit f, ATP5MG/subunit g, ATP5MK/subunit k, ATP5MJ/subunit j, ATP5F1C/subunit gamma, ATP5F1D/subunit delta, ATP5F1E/subunit epsilon, ATP5PF/subunit F6, ATP5PB/subunit b, ATP5PD/subunit d, ATP5PO/subunit OSCP. ATP synthase complex consists of a soluble F(1) head domain (subunits alpha(3) and beta(3)) - the catalytic core - and a membrane F(0) domain - the membrane proton channel (subunits c, a, 8, e, f, g, k and j). These two domains are linked by a central stalk (subunits gamma, delta, and epsilon) rotating inside the F1 region and a stationary peripheral stalk (subunits F6, b, d, and OSCP). Interacts with DNAJC30; interaction is direct.

The protein resides in the mitochondrion inner membrane. It catalyses the reaction H(+)(in) = H(+)(out). Its function is as follows. Subunit a, of the mitochondrial membrane ATP synthase complex (F(1)F(0) ATP synthase or Complex V) that produces ATP from ADP in the presence of a proton gradient across the membrane which is generated by electron transport complexes of the respiratory chain. ATP synthase complex consist of a soluble F(1) head domain - the catalytic core - and a membrane F(1) domain - the membrane proton channel. These two domains are linked by a central stalk rotating inside the F(1) region and a stationary peripheral stalk. During catalysis, ATP synthesis in the catalytic domain of F(1) is coupled via a rotary mechanism of the central stalk subunits to proton translocation. With the subunit c (ATP5MC1), forms the proton-conducting channel in the F(0) domain, that contains two crucial half-channels (inlet and outlet) that facilitate proton movement from the mitochondrial intermembrane space (IMS) into the matrix. Protons are taken up via the inlet half-channel and released through the outlet half-channel, following a Grotthuss mechanism. The sequence is that of ATP synthase F(0) complex subunit a from Dugong dugon (Dugong).